The following is a 225-amino-acid chain: Histone H1 (225 aa).

Positions 1-20 (MGPKATSGTRGRGKKVGTKT) are disordered. An H15 domain is found at 23 to 94 (PLPKYKDLIV…GPAGSIKLLK (72 aa)). Residues 95 to 147 (KAAQPKPEEAKRAAKPAKRVVKAAKPAKAKPAKAAKAAKPAKPVKAAKAASAV) form a disordered region. The span at 107–127 (AAKPAKRVVKAAKPAKAKPAK) shows a compositional bias: basic residues. The segment covering 128 to 147 (AAKAAKPAKPVKAAKAASAV) has biased composition (low complexity).

Belongs to the histone H1/H5 family.

It is found in the nucleus. It localises to the chromosome. Could act as an H1-type linker histone. The polypeptide is Histone H1 (HHOA) (Eremothecium gossypii (strain ATCC 10895 / CBS 109.51 / FGSC 9923 / NRRL Y-1056) (Yeast)).